The primary structure comprises 297 residues: Bifunctional protein FolD (297 aa).

NADP(+)-binding positions include 168–170, Thr-197, and Val-238; that span reads GRS.

This sequence belongs to the tetrahydrofolate dehydrogenase/cyclohydrolase family. As to quaternary structure, homodimer.

The catalysed reaction is (6R)-5,10-methylene-5,6,7,8-tetrahydrofolate + NADP(+) = (6R)-5,10-methenyltetrahydrofolate + NADPH. It catalyses the reaction (6R)-5,10-methenyltetrahydrofolate + H2O = (6R)-10-formyltetrahydrofolate + H(+). The protein operates within one-carbon metabolism; tetrahydrofolate interconversion. Catalyzes the oxidation of 5,10-methylenetetrahydrofolate to 5,10-methenyltetrahydrofolate and then the hydrolysis of 5,10-methenyltetrahydrofolate to 10-formyltetrahydrofolate. The chain is Bifunctional protein FolD from Lawsonia intracellularis (strain PHE/MN1-00).